The primary structure comprises 78 residues: Acyl carrier protein (78 aa).

One can recognise a Carrier domain in the interval 2–77; that stretch reads STIEERVKKI…AAIDYVNSHK (76 aa). O-(pantetheine 4'-phosphoryl)serine is present on Ser-37.

This sequence belongs to the acyl carrier protein (ACP) family. In terms of processing, 4'-phosphopantetheine is transferred from CoA to a specific serine of apo-ACP by AcpS. This modification is essential for activity because fatty acids are bound in thioester linkage to the sulfhydryl of the prosthetic group.

It is found in the cytoplasm. It functions in the pathway lipid metabolism; fatty acid biosynthesis. Carrier of the growing fatty acid chain in fatty acid biosynthesis. This is Acyl carrier protein from Pseudomonas putida (strain GB-1).